The primary structure comprises 366 residues: CRS2-associated factor 2, mitochondrial (366 aa).

A mitochondrion-targeting transit peptide spans Met1–Arg14. Positions Arg24–Asp82 are disordered. A compositionally biased stretch (basic and acidic residues) spans Lys60 to Pro71. 2 consecutive CRM domains span residues Glu143–Gln241 and Asp263–Leu359.

Part of large ribonucleo-protein complexes that include group IIB introns.

Its subcellular location is the mitochondrion. In terms of biological role, may be involved in the splicing of group IIB introns in mitochondria. In Oryza sativa subsp. japonica (Rice), this protein is CRS2-associated factor 2, mitochondrial.